Reading from the N-terminus, the 670-residue chain is WD repeat-containing protein 48 homolog (670 aa).

7 WD repeats span residues 13 to 52 (RHRN…SQEP), 59 to 98 (HHND…CMST), 101 to 140 (THRD…ALTA), 152 to 191 (GSKD…KIAK), 194 to 233 (GHTE…CIQT), 236 to 275 (VHSE…NSVL), and 278 to 317 (EERA…KLSN). The disordered stretch occupies residues 321 to 348 (SSNSSINSGGGGDGTPVTNSASNATPAS). Low complexity predominate over residues 338–348 (TNSASNATPAS). One copy of the WD 8 repeat lies at 359-398 (KGGAAIKKYHVLNDKRFMLTKDSEQNVAIYDVLKVKKVED). The span at 613–625 (GGGGGSSTGGGGN) shows a compositional bias: gly residues. The tract at residues 613 to 645 (GGGGGSSTGGGGNSNSSQNNSQSDANSEGSQVP) is disordered. The segment covering 626 to 635 (SNSSQNNSQS) has biased composition (low complexity).

The protein belongs to the WD repeat WDR48 family. In terms of assembly, catalytic component of the Usp12-46 deubiquitylase complex consisting of Usp12-46, Wdr20 and Uaf1; regulatory subunit that, together wtih Wdr20, stabilizes Usp12-46. The Usp12-46 deubiquitylase complex associates with arr/arrow; the interaction leads to deubiquitination and stabilization of arr/arrow.

Regulatory component of the Usp12-46 deubiquitylase complex. activates deubiquitination by increasing the catalytic turnover without increasing the affinity of deubiquitinating enzymes for the substrate. The complex deubiquitylates the wg/wingless-signaling receptor arr/arrow, which stabilizes the receptor and increases its concentration at the cell surface; this enhances the sensitivity of cells to wg/wingless-signal stimulation. This increases the amplitude and spatial range of the signaling response to the wg/wingless morphogen gradient, facilitating the precise concentration-dependent regulation of its target genes. Together with Wdr20 and Usp12-46 required for wg/wingless-mediated signaling in the wing imaginal disc and for wg/wingless-dependent regulation of intestinal stem cell proliferation. The protein is WD repeat-containing protein 48 homolog of Culex quinquefasciatus (Southern house mosquito).